The chain runs to 566 residues: Sodium-dependent high-affinity dicarboxylate transporter 3 (566 aa).

12 helical membrane passes run 55 to 75 (LVLV…GPEW), 92 to 112 (VMPL…VGVL), 123 to 139 (NDTN…AAAV), 162 to 182 (WIML…SNTA), 219 to 239 (MATG…TGTA), 268 to 288 (WIFF…MTLV), 329 to 349 (ILLS…GVFF), 352 to 372 (GAYT…VLPS), 400 to 420 (ETFP…AAGV), 439 to 459 (LPLW…TNIC), 496 to 516 (FAFI…SGMV), and 521 to 541 (MAFV…LYMN).

Belongs to the SLC13A/DASS transporter (TC 2.A.47) family. NADC subfamily. As to expression, nad-1 and nad-2 are coexpressed in the intestinal tract from early larvae to adults, expression is from the pharynx through to the anus. Expression level is significantly greater in the anterior half of the intestine than in the posterior half.

It localises to the membrane. Its function is as follows. High-affinity sodium-dicarboxylate cotransporter that accepts a range of tricarboxylic acid-cycle intermediates with 4-5 carbon atoms. There is no interaction with monocarboxylates. Plays a role in the regulation of life span. This chain is Sodium-dependent high-affinity dicarboxylate transporter 3 (nac-3), found in Caenorhabditis elegans.